A 515-amino-acid polypeptide reads, in one-letter code: BURP domain-containing protein 9 (515 aa).

The N-terminal stretch at 1–29 (MKATGGPLPLILFLLIIIVLITAQHTAIA) is a signal peptide. In terms of domain architecture, BURP spans 292 to 507 (YFFEDNLAPG…GRGSIIWVPV (216 aa)). N-linked (GlcNAc...) asparagine glycans are attached at residues N321, N332, and N470.

Expressed in shoot and panicles.

The chain is BURP domain-containing protein 9 (BURP9) from Oryza sativa subsp. japonica (Rice).